The sequence spans 408 residues: Peptidase T (408 aa).

Histidine 78 serves as a coordination point for Zn(2+). Aspartate 80 is an active-site residue. Position 140 (aspartate 140) interacts with Zn(2+). Glutamate 173 acts as the Proton acceptor in catalysis. Residues glutamate 174, aspartate 196, and histidine 379 each contribute to the Zn(2+) site.

Belongs to the peptidase M20B family. It depends on Zn(2+) as a cofactor.

It localises to the cytoplasm. The enzyme catalyses Release of the N-terminal residue from a tripeptide.. In terms of biological role, cleaves the N-terminal amino acid of tripeptides. This chain is Peptidase T, found in Shigella boydii serotype 18 (strain CDC 3083-94 / BS512).